Reading from the N-terminus, the 92-residue chain is Conotoxin Im9.4 (92 aa).

Positions 1-20 (MHRSLAGSAVLMLLLLFALG) are cleaved as a signal peptide. A propeptide spanning residues 21–62 (NFVGVQPGLVTRDADNGQLMDNRRNLRLERKTMSLFKSLDKR) is cleaved from the precursor. Cystine bridges form between cysteine 65/cysteine 79, cysteine 69/cysteine 81, and cysteine 75/cysteine 87. Asparagine amide is present on asparagine 90.

The protein belongs to the conotoxin P superfamily. In terms of tissue distribution, expressed by the venom duct.

The protein resides in the secreted. Functionally, probable neurotoxin that inhibits ion channels. The polypeptide is Conotoxin Im9.4 (Conus imperialis (Imperial cone)).